The chain runs to 658 residues: Carnitine O-palmitoyltransferase 2, mitochondrial (658 aa).

Residues 1–25 (MVPRLLLRAWPRGPAVGPGAPSRPL) constitute a mitochondrion transit peptide. Residues 26 to 178 (SAGSGPGQYL…GLLEPEVFHL (153 aa)) are Mitochondrial matrix-facing. Residue K69 is modified to N6-succinyllysine. Residue K79 is modified to N6-acetyllysine. Position 85 is an N6-succinyllysine (K85). The note=Mitochondrial inner membrane intramembrane region spans 179 to 208 (NPAKSDTITFKRLIRFVPSSLSWYGAYLVN). Residues 209–658 (AYPLDMSQYF…DALEGKSIKS (450 aa)) lie on the Mitochondrial matrix side of the membrane. N6-acetyllysine; alternate is present on K239. Residue K239 is modified to N6-succinyllysine; alternate. Residue K305 is modified to N6-acetyllysine. H372 (proton acceptor) is an active-site residue. An N6-succinyllysine mark is found at K424 and K439. 452–464 (GKEFLKKQKLSPD) contributes to the CoA binding site. Residues Y486, S488, and T499 each contribute to the (R)-carnitine site. N6-acetyllysine; alternate is present on residues K510 and K544. N6-succinyllysine; alternate occurs at positions 510 and 544.

This sequence belongs to the carnitine/choline acetyltransferase family.

It is found in the mitochondrion inner membrane. The catalysed reaction is (R)-carnitine + hexadecanoyl-CoA = O-hexadecanoyl-(R)-carnitine + CoA. It catalyses the reaction octanoyl-CoA + (R)-carnitine = O-octanoyl-(R)-carnitine + CoA. The enzyme catalyses decanoyl-CoA + (R)-carnitine = O-decanoyl-(R)-carnitine + CoA. It carries out the reaction dodecanoyl-CoA + (R)-carnitine = O-dodecanoyl-R-carnitine + CoA. The catalysed reaction is tetradecanoyl-CoA + (R)-carnitine = O-tetradecanoyl-(R)-carnitine + CoA. It catalyses the reaction (R)-carnitine + octadecanoyl-CoA = O-octadecanoyl-(R)-carnitine + CoA. The enzyme catalyses eicosanoyl-CoA + (R)-carnitine = O-eicosanoyl-(R)-carnitine + CoA. It carries out the reaction (9Z)-tetradecenoyl-CoA + (R)-carnitine = O-(9Z)-tetradecenoyl-(R)-carnitine + CoA. The catalysed reaction is (5Z)-tetradecenoyl-CoA + (R)-carnitine = O-(5Z)-tetradecenoyl-(R)-carnitine + CoA. It catalyses the reaction (R)-carnitine + (9Z)-octadecenoyl-CoA = O-(9Z)-octadecenoyl-(R)-carnitine + CoA. The enzyme catalyses 4,8-dimethylnonanoyl-CoA + (R)-carnitine = O-4,8-dimethylnonanoyl-(R)-carnitine + CoA. It participates in lipid metabolism; fatty acid beta-oxidation. Its activity is regulated as follows. Inhibited by trans-2-hexadecanoyl-CoA. Functionally, involved in the intramitochondrial synthesis of acylcarnitines from accumulated acyl-CoA metabolites. Reconverts acylcarnitines back into the respective acyl-CoA esters that can then undergo beta-oxidation, an essential step for the mitochondrial uptake of long-chain fatty acids and their subsequent beta-oxidation in the mitochondrion. Active with medium (C8-C12) and long-chain (C14-C18) acyl-CoA esters. In Homo sapiens (Human), this protein is Carnitine O-palmitoyltransferase 2, mitochondrial.